The sequence spans 135 residues: Small ribosomal subunit protein eS6 (135 aa).

This sequence belongs to the eukaryotic ribosomal protein eS6 family.

The chain is Small ribosomal subunit protein eS6 from Halorubrum lacusprofundi (strain ATCC 49239 / DSM 5036 / JCM 8891 / ACAM 34).